Here is a 318-residue protein sequence, read N- to C-terminus: D-alanine--D-alanine ligase B (318 aa).

The region spanning 117–315 (KQVWLSLGLS…FEALVWRVLE (199 aa)) is the ATP-grasp domain. 146–201 (AEQIGLPVIVKPANEGSSVGVSRVFDQAQLDEAVTLAARYDGALLMEQLIEGDELT) is an ATP binding site. Positions 268, 282, and 284 each coordinate Mg(2+).

This sequence belongs to the D-alanine--D-alanine ligase family. The cofactor is Mg(2+). Mn(2+) serves as cofactor.

The protein resides in the cytoplasm. The enzyme catalyses 2 D-alanine + ATP = D-alanyl-D-alanine + ADP + phosphate + H(+). It participates in cell wall biogenesis; peptidoglycan biosynthesis. Its function is as follows. Cell wall formation. In Xanthomonas campestris pv. campestris (strain ATCC 33913 / DSM 3586 / NCPPB 528 / LMG 568 / P 25), this protein is D-alanine--D-alanine ligase B.